We begin with the raw amino-acid sequence, 168 residues long: Probable chemoreceptor glutamine deamidase CheD 2 (168 aa).

The protein belongs to the CheD family.

It carries out the reaction L-glutaminyl-[protein] + H2O = L-glutamyl-[protein] + NH4(+). In terms of biological role, probably deamidates glutamine residues to glutamate on methyl-accepting chemotaxis receptors (MCPs), playing an important role in chemotaxis. This Leptospira interrogans serogroup Icterohaemorrhagiae serovar copenhageni (strain Fiocruz L1-130) protein is Probable chemoreceptor glutamine deamidase CheD 2.